The following is a 372-amino-acid chain: MENQPQNKPIIELRSIKKSYGSNTIINDFNLAINNGEFVTILGPSGCGKTTVLRLLAGLEELDSGSIILDGEDITNVPAEKRHINTVFQSYALFPHMTIFENVAFGLRMQKVPNEEIKPRVLEALRMVQLEEMADRKPTQLSGGQQQRIAIARAVVNKPKVLLLDESLSALDYKLRKQMQQELKMLQRQLGITFIFVTHDQEEAITMSDRIVLLRKGKIAQDGSPREIYEDPANLFVARFIGEINVFEATVIERKSEQVVLANVEGRICDIYTDMPVEKDQKLQVLLRPEDIVIEELDENEHSKAIIGHIIDRTYKGMTLESTVEFDHNGMRVLVSEFFNEDDPHMDHSIGQRVGITWHEGWEVVLNDEDNQ.

An ABC transporter domain is found at 11–241; that stretch reads IELRSIKKSY…PANLFVARFI (231 aa). 43 to 50 is a binding site for ATP; sequence GPSGCGKT.

This sequence belongs to the ABC transporter superfamily. Spermidine/putrescine importer (TC 3.A.1.11.1) family. As to quaternary structure, the complex is composed of two ATP-binding proteins (PotA), two transmembrane proteins (PotB and PotC) and a solute-binding protein (PotD).

It is found in the cell inner membrane. It carries out the reaction ATP + H2O + polyamine-[polyamine-binding protein]Side 1 = ADP + phosphate + polyamineSide 2 + [polyamine-binding protein]Side 1.. Functionally, part of the ABC transporter complex PotABCD involved in spermidine/putrescine import. Responsible for energy coupling to the transport system. The polypeptide is Spermidine/putrescine import ATP-binding protein PotA (Haemophilus influenzae (strain 86-028NP)).